The sequence spans 299 residues: Ethylmalonyl-CoA decarboxylase (299 aa).

It belongs to the enoyl-CoA hydratase/isomerase family.

The protein resides in the cytoplasm. Its subcellular location is the cytosol. It carries out the reaction (2S)-ethylmalonyl-CoA + H(+) = butanoyl-CoA + CO2. The catalysed reaction is (S)-methylmalonyl-CoA + H(+) = propanoyl-CoA + CO2. It catalyses the reaction (2R)-ethylmalonyl-CoA + H(+) = butanoyl-CoA + CO2. Functionally, decarboxylates ethylmalonyl-CoA, a potentially toxic metabolite, to form butyryl-CoA, suggesting it might be involved in metabolite proofreading. Acts preferentially on (S)-ethylmalonyl-CoA but also has some activity on the (R)-isomer. Also has methylmalonyl-CoA decarboxylase activity at lower level. The sequence is that of Ethylmalonyl-CoA decarboxylase (echdc1) from Xenopus laevis (African clawed frog).